Consider the following 631-residue polypeptide: tRNA uridine 5-carboxymethylaminomethyl modification enzyme MnmG (631 aa).

An FAD-binding site is contributed by 15-20 (GAGHAG). The disordered stretch occupies residues 214–233 (YSKTEEEPGDKEPRHFSFTS). 276–290 (GPRYCPSIETKVVRF) serves as a coordination point for NAD(+).

The protein belongs to the MnmG family. In terms of assembly, homodimer. Heterotetramer of two MnmE and two MnmG subunits. Requires FAD as cofactor.

It localises to the cytoplasm. Functionally, NAD-binding protein involved in the addition of a carboxymethylaminomethyl (cmnm) group at the wobble position (U34) of certain tRNAs, forming tRNA-cmnm(5)s(2)U34. The sequence is that of tRNA uridine 5-carboxymethylaminomethyl modification enzyme MnmG from Lactobacillus delbrueckii subsp. bulgaricus (strain ATCC BAA-365 / Lb-18).